The primary structure comprises 185 residues: Peptidyl-tRNA hydrolase (185 aa).

TRNA is bound at residue Tyr-14. The active-site Proton acceptor is His-19. Residues Phe-64, Asn-66, and Asn-112 each contribute to the tRNA site.

The protein belongs to the PTH family. In terms of assembly, monomer.

The protein localises to the cytoplasm. The enzyme catalyses an N-acyl-L-alpha-aminoacyl-tRNA + H2O = an N-acyl-L-amino acid + a tRNA + H(+). Functionally, hydrolyzes ribosome-free peptidyl-tRNAs (with 1 or more amino acids incorporated), which drop off the ribosome during protein synthesis, or as a result of ribosome stalling. Its function is as follows. Catalyzes the release of premature peptidyl moieties from peptidyl-tRNA molecules trapped in stalled 50S ribosomal subunits, and thus maintains levels of free tRNAs and 50S ribosomes. The chain is Peptidyl-tRNA hydrolase from Latilactobacillus sakei subsp. sakei (strain 23K) (Lactobacillus sakei subsp. sakei).